The primary structure comprises 396 residues: tRNA-specific 2-thiouridylase MnmA (396 aa).

ATP contacts are provided by residues 11 to 18 (GLSGGVDS) and Met37. Residues 97–99 (NPD) form an interaction with target base in tRNA region. Residue Cys102 is the Nucleophile of the active site. A disulfide bridge links Cys102 with Cys225. Gly126 is an ATP binding site. An interaction with tRNA region spans residues 175–177 (KDQ). The Cysteine persulfide intermediate role is filled by Cys225. Residues 343–344 (RY) form an interaction with tRNA region.

The protein belongs to the MnmA/TRMU family.

The protein resides in the cytoplasm. The enzyme catalyses S-sulfanyl-L-cysteinyl-[protein] + uridine(34) in tRNA + AH2 + ATP = 2-thiouridine(34) in tRNA + L-cysteinyl-[protein] + A + AMP + diphosphate + H(+). Catalyzes the 2-thiolation of uridine at the wobble position (U34) of tRNA, leading to the formation of s(2)U34. The chain is tRNA-specific 2-thiouridylase MnmA from Methylibium petroleiphilum (strain ATCC BAA-1232 / LMG 22953 / PM1).